Here is a 496-residue protein sequence, read N- to C-terminus: NAD(P)H-quinone oxidoreductase subunit 2, chloroplastic (496 aa).

A run of 14 helical transmembrane segments spans residues Ser-14–Val-34, Met-42–Trp-62, Phe-79–Phe-99, Leu-109–Ala-129, Ile-133–Val-153, Leu-167–Leu-187, Leu-210–Val-230, Pro-244–Ile-264, Ile-281–Thr-301, Arg-305–Gly-325, Leu-334–Phe-354, Ala-377–Phe-397, Ile-400–Phe-420, and Ile-469–Phe-489.

The protein belongs to the complex I subunit 2 family. In terms of assembly, NDH is composed of at least 16 different subunits, 5 of which are encoded in the nucleus.

The protein localises to the plastid. It localises to the chloroplast thylakoid membrane. It carries out the reaction a plastoquinone + NADH + (n+1) H(+)(in) = a plastoquinol + NAD(+) + n H(+)(out). The enzyme catalyses a plastoquinone + NADPH + (n+1) H(+)(in) = a plastoquinol + NADP(+) + n H(+)(out). NDH shuttles electrons from NAD(P)H:plastoquinone, via FMN and iron-sulfur (Fe-S) centers, to quinones in the photosynthetic chain and possibly in a chloroplast respiratory chain. The immediate electron acceptor for the enzyme in this species is believed to be plastoquinone. Couples the redox reaction to proton translocation, and thus conserves the redox energy in a proton gradient. The polypeptide is NAD(P)H-quinone oxidoreductase subunit 2, chloroplastic (Chara vulgaris (Common stonewort)).